A 437-amino-acid polypeptide reads, in one-letter code: Probable indole-3-pyruvate monooxygenase YUCCA3 (437 aa).

41–46 (GAGPSG) lines the FAD pocket. 212 to 217 (GCGNSG) is a binding site for NADP(+).

The protein belongs to the FMO family. The cofactor is FAD.

The enzyme catalyses indole-3-pyruvate + NADPH + O2 + H(+) = (indol-3-yl)acetate + CO2 + NADP(+) + H2O. It functions in the pathway plant hormone metabolism; auxin biosynthesis. In terms of biological role, involved in auxin biosynthesis. Belongs to the set of redundant YUCCA genes probably responsible for auxin biosynthesis in roots. This Arabidopsis thaliana (Mouse-ear cress) protein is Probable indole-3-pyruvate monooxygenase YUCCA3 (YUC3).